The primary structure comprises 196 residues: MAAPGPGEYFSVGSHVSCLTCLGQRLQGEVVAFDYPSKMLTLKCPSSSGKPNLSDVILINLAYVSEVDIINDRTETPPPLASLNISKLANRARTEKEDKLSQAYAISAGVSIEGQQLFQTIHKTIKDCKWQEKNIIVMDDVVISPPYQVENCKGKEGSALSHIRKIVEKHFRDVESQKTMQRSQAQQTQKDSSLSS.

Residues alanine 3–arginine 73 enclose the Sm domain. The AD domain occupies alanine 81–glutamate 175. A disordered region spans residues valine 174–serine 196. Polar residues predominate over residues glutamine 177 to serine 196.

It belongs to the LSM12 family.

This is Protein LSM12 homolog A (lsm12a) from Danio rerio (Zebrafish).